Here is a 402-residue protein sequence, read N- to C-terminus: MLLAALLAALVARTTLGADVDAVPAPTFPPPAYPYTESWQLTLTTVPSPFVGPADVYHTRPLEDPCGVVALISDPQVDRLLNEAVAHRRPTYRAHVAWYRIADGCAHLLYFIEYADCDPRQVFGRCRRRTTPMWWTPSADYMFPTEDELGLLMVAPGRFNEGQYRRLVSVDGVNILTDFMVALPEGQECPFARVDQHRTYKFGACWSDDSFKRGVDVMRFLTPFYQQPPHREVVNYWYRKNGRTLPRAHAAATPYAIDPARPSAGSPRPRPRPRPRPRPKPEPAPATPAPPDRLPEPATRDHAAGGRPTPRPPRPETPHRPFAPPAVVPSGWPQPAEPFQPRTPAAPGVSRHRSVIVGTGTAMGALLVGVCVYIFFRLRGAKGYRLLGGPADADELKAQPGP.

A signal peptide spans 1 to 17; that stretch reads MLLAALLAALVARTTLG. Disulfide bonds link cysteine 66–cysteine 189, cysteine 105–cysteine 205, and cysteine 117–cysteine 126. Residues 238 to 316 form a profusion region; sequence YRKNGRTLPR…RPTPRPPRPE (79 aa). The interval 252 to 350 is disordered; it reads ATPYAIDPAR…PRTPAAPGVS (99 aa). Residues 269–278 show a composition bias toward basic residues; sequence PRPRPRPRPR. The segment covering 282–292 has biased composition (pro residues); sequence EPAPATPAPPD. Positions 293-304 are enriched in basic and acidic residues; sequence RLPEPATRDHAA. The chain crosses the membrane as a helical span at residues 356 to 376; sequence IVGTGTAMGALLVGVCVYIFF.

Belongs to the herpesviridae glycoprotein D family. Post-translationally, not N-glycosylated.

It is found in the virion membrane. In terms of biological role, envelope glycoprotein that binds to the host cell entry receptor NECTIN1, promoting the virus entry into host cells. In contrast, does not use host TNFRSF14 as receptor. May trigger fusion with host membrane, by recruiting the fusion machinery composed of gB and gH/gL. The polypeptide is Envelope glycoprotein D (Suid herpesvirus 1 (strain Rice) (SuHV-1)).